A 71-amino-acid polypeptide reads, in one-letter code: SRY-related protein LG27 (71 aa).

The HMG box DNA-binding region spans 1 to 68; it reads VKRPMNAFMV…KHMADYPNYK (68 aa).

The protein resides in the nucleus. In Eublepharis macularius (Leopard gecko), this protein is SRY-related protein LG27.